The sequence spans 2162 residues: Calpain-type cysteine protease ADL1 (2162 aa).

The signal sequence occupies residues 1–33 (MEEEEHRGVVLVCSICGFLFAVLGPLSFWILWA). Topologically, residues 34-70 (VNWRPWRLYSWIYARKWPAYVQGPQLSTLCSFFTLFA) are extracellular. A helical transmembrane segment spans residues 71–91 (WLVVVSPITVLLVWGGILIAL). The Cytoplasmic portion of the chain corresponds to 92-95 (LERN). The chain crosses the membrane as a helical span at residues 96–116 (IIGLAVIMVGVALLLSFYSIM). Residues 117-127 (LWWRTQWQSSK) lie on the Extracellular side of the membrane. Residues 128-148 (AVAYLLLLAVGLLCAYEFCAV) form a helical membrane-spanning segment. At 149–164 (YVTTGASASELNSPSG) the chain is on the cytoplasmic side. A helical membrane pass occupies residues 165–185 (FFFGVSAISLAINMLFISKIL). Over 186-236 (FNGSGFDVDEYVRRLYKFAYSDCVEVAPVSCSPDPPDPSELYMTKSSRVLH) the chain is Extracellular. A helical membrane pass occupies residues 237-257 (LGLLYLCSLMVLVVYSILYGL). Over 258 to 264 (TSKEARW) the chain is Cytoplasmic. The helical transmembrane segment at 265–285 (LGALTSVAVVILDWNLGLCSF) threads the bilayer. Residues 286 to 294 (RFELLKSRM) lie on the Extracellular side of the membrane. Residues 295-315 (IALFVAGTSRVFLICFGVHYW) traverse the membrane as a helical segment. Over 316–320 (YLGHC) the chain is Cytoplasmic. Residues 321 to 341 (ISYAFVASVLLAAAVSCWLSI) traverse the membrane as a helical segment. Residues 342–626 (SNPSVARIDA…LMFHQVAGSP (285 aa)) lie on the Extracellular side of the membrane. The segment at 366-403 (KGQTSSSNSSDGCGSSVKRSSGSVEAGPHGNATDSMYR) is disordered. A compositionally biased stretch (low complexity) spans 370 to 381 (SSSNSSDGCGSS). The helical transmembrane segment at 627 to 647 (IRAFVVFTLIFIIETVTVAVH) threads the bilayer. Residues 648–663 (RPKPIKVINATHEQFE) lie on the Cytoplasmic side of the membrane. A helical membrane pass occupies residues 664 to 684 (FGFSILLLSPVVCSIMAFIWS). The Extracellular segment spans residues 685–697 (LCAEEMTMTSKPR). Residues 698 to 718 (KYGFIAWLLSTCVGLLLSFLS) form a helical membrane-spanning segment. Residues 719–722 (KSSV) are Cytoplasmic-facing. A helical transmembrane segment spans residues 723–743 (ILGLSLTVPLMVACLSFAIPI). Over 744 to 773 (WMRNGYRFWIPGGELDSRENIRQAPGKKER) the chain is Extracellular. Residues 774 to 794 (ALFAISITVFTASVIGLGAIV) traverse the membrane as a helical segment. The Cytoplasmic portion of the chain corresponds to 795–825 (SAKPLDALGYKGWDADKKSFYSPYATSMYLG). Residues 826 to 846 (WALSSTIAVLATGVIPIVAWF) traverse the membrane as a helical segment. The Extracellular segment spans residues 847-856 (ATYRFSPSSA). A helical transmembrane segment spans residues 857–877 (ICVGLFATVLVSFCGVSYWGV). The Cytoplasmic segment spans residues 878–890 (VNSRQDGVPLKAD). Residues 891 to 911 (FLAALLPLLCIPAVFSLFTGM) traverse the membrane as a helical segment. Residues 912–924 (YKWKDDDWKISRG) are Extracellular-facing. Residues 925-945 (VYLFVGMGVLLLLGAISAVIV) form a helical membrane-spanning segment. Residues 946–949 (TIRP) lie on the Cytoplasmic side of the membrane. The helical transmembrane segment at 950 to 970 (WTVGVACLLVILFLVFAIGVI) threads the bilayer. Over 971–984 (HYWTSNNFYLTRTQ) the chain is Extracellular. The chain crosses the membrane as a helical span at residues 985–1005 (MLLVCSLAFLLALAAFLMGLF). Over 1006-1019 (QEKPFVGASIGYFS) the chain is Cytoplasmic. The helical transmembrane segment at 1020 to 1040 (FLFLLTGRALTVLLSPPIVVY) threads the bilayer. Residues 1041-1063 (SPRVLPVYVYDAHADSAKNVSYA) are Extracellular-facing. A helical transmembrane segment spans residues 1064-1084 (FLILYGIALATEVWGVIASLI). Over 1085-2162 (LNPPFIGAAI…TKAPIKLEAV (1078 aa)) the chain is Cytoplasmic. Residues serine 1372 and serine 1377 each carry the phosphoserine modification. A Calpain catalytic 1 domain is found at 1418–1611 (TGRHCGEIDL…ICSAEYGLFD (194 aa)). Position 1668 is a phosphoserine (serine 1668). The 303-residue stretch at 1706-2008 (NFTDQEFPPD…FRSIYVCRVY (303 aa)) folds into the Calpain catalytic 2 domain. Residues cysteine 1772, histidine 1930, and asparagine 1950 contribute to the active site.

The protein belongs to the peptidase C2 family. Post-translationally, autocatalytic proteolytic cleavage leading to the production of mainly cytoplasmic localized subproducts of about 85 and 120 kDa. Ubiquitously expressed with higher levels in embryos, vasculatures, leaf primordia, leaf margins, and shoot apical meristem (SAM).

It is found in the endoplasmic reticulum membrane. The protein resides in the cytoplasm. Its subcellular location is the cell membrane. The protein localises to the endosome membrane. Essential protease involved in epiderm development. Required for aleurone cell development in the endosperm probably by maintaining and restricting the aleurone and embryonic epidermal L1 cell-layer fates as well as meristems organization. Involved in the maintenance of adaxial/abaxial axis information in developing leaves, probably by regulating cell proliferation and expansion. Does not need calcium ions to be active. The sequence is that of Calpain-type cysteine protease ADL1 (ADL1) from Oryza sativa subsp. japonica (Rice).